A 202-amino-acid chain; its full sequence is ATP-dependent Clp protease proteolytic subunit (202 aa).

Residue Ser-101 is the Nucleophile of the active site. Residue His-126 is part of the active site.

It belongs to the peptidase S14 family. Component of the chloroplastic Clp protease core complex.

It is found in the plastid. Its subcellular location is the chloroplast stroma. The catalysed reaction is Hydrolysis of proteins to small peptides in the presence of ATP and magnesium. alpha-casein is the usual test substrate. In the absence of ATP, only oligopeptides shorter than five residues are hydrolyzed (such as succinyl-Leu-Tyr-|-NHMec, and Leu-Tyr-Leu-|-Tyr-Trp, in which cleavage of the -Tyr-|-Leu- and -Tyr-|-Trp bonds also occurs).. In terms of biological role, cleaves peptides in various proteins in a process that requires ATP hydrolysis. Has a chymotrypsin-like activity. Plays a major role in the degradation of misfolded proteins. The protein is ATP-dependent Clp protease proteolytic subunit of Drimys granadensis.